Consider the following 124-residue polypeptide: Small ribosomal subunit protein eS6 (124 aa).

Belongs to the eukaryotic ribosomal protein eS6 family.

The protein is Small ribosomal subunit protein eS6 of Methanococcus maripaludis (strain C6 / ATCC BAA-1332).